A 155-amino-acid chain; its full sequence is 6,7-dimethyl-8-ribityllumazine synthase (155 aa).

5-amino-6-(D-ribitylamino)uracil contacts are provided by residues Phe23, 57–59, and 81–83; these read AFE and AVI. A (2S)-2-hydroxy-3-oxobutyl phosphate-binding site is contributed by 86–87; sequence ST. His89 functions as the Proton donor in the catalytic mechanism. 5-amino-6-(D-ribitylamino)uracil is bound at residue Phe114. (2S)-2-hydroxy-3-oxobutyl phosphate is bound at residue Arg128.

This sequence belongs to the DMRL synthase family.

It catalyses the reaction (2S)-2-hydroxy-3-oxobutyl phosphate + 5-amino-6-(D-ribitylamino)uracil = 6,7-dimethyl-8-(1-D-ribityl)lumazine + phosphate + 2 H2O + H(+). It participates in cofactor biosynthesis; riboflavin biosynthesis; riboflavin from 2-hydroxy-3-oxobutyl phosphate and 5-amino-6-(D-ribitylamino)uracil: step 1/2. Its function is as follows. Catalyzes the formation of 6,7-dimethyl-8-ribityllumazine by condensation of 5-amino-6-(D-ribitylamino)uracil with 3,4-dihydroxy-2-butanone 4-phosphate. This is the penultimate step in the biosynthesis of riboflavin. This is 6,7-dimethyl-8-ribityllumazine synthase from Dehalococcoides mccartyi (strain ATCC BAA-2266 / KCTC 15142 / 195) (Dehalococcoides ethenogenes (strain 195)).